The sequence spans 385 residues: Putative transport protein BpOF4_00890 (385 aa).

The next 8 membrane-spanning stretches (helical) occupy residues 42 to 62 (TIWI…ILPV), 63 to 83 (SLPL…VNAL), 93 to 113 (VAVM…GYYI), 191 to 211 (SIPG…LFML), 255 to 275 (IIIF…VALL), 276 to 296 (MAFI…VILA), 304 to 324 (IVGD…LLII), and 350 to 370 (LGLM…VIAF).

The protein belongs to the autoinducer-2 exporter (AI-2E) (TC 2.A.86) family.

It localises to the cell membrane. This Alkalihalophilus pseudofirmus (strain ATCC BAA-2126 / JCM 17055 / OF4) (Bacillus pseudofirmus) protein is Putative transport protein BpOF4_00890.